Reading from the N-terminus, the 196-residue chain is Probable malonic semialdehyde reductase RutE (196 aa).

The protein belongs to the nitroreductase family. HadB/RutE subfamily. FMN is required as a cofactor.

The enzyme catalyses 3-hydroxypropanoate + NADP(+) = 3-oxopropanoate + NADPH + H(+). May reduce toxic product malonic semialdehyde to 3-hydroxypropionic acid, which is excreted. The protein is Probable malonic semialdehyde reductase RutE of Klebsiella pneumoniae (strain 342).